Reading from the N-terminus, the 207-residue chain is Inhibitor of hydrogen peroxide resistance (207 aa).

A DNA-binding region (H-T-H motif) is located at residues 163–182; sequence MNYIHQRTRVSRSVVAEVLA.

This sequence belongs to the IprA family.

Involved in oxidative stress resistance. This is Inhibitor of hydrogen peroxide resistance from Salmonella typhimurium (strain LT2 / SGSC1412 / ATCC 700720).